The chain runs to 336 residues: Glycerol-3-phosphate dehydrogenase [NAD(P)+] (336 aa).

NADPH contacts are provided by Ser11, Trp12, Arg32, and Lys106. The sn-glycerol 3-phosphate site is built by Lys106 and Gly136. Position 140 (Ala140) interacts with NADPH. The sn-glycerol 3-phosphate site is built by Lys191, Asp244, Ser254, Arg255, and Asn256. Catalysis depends on Lys191, which acts as the Proton acceptor. Residue Arg255 coordinates NADPH. 2 residues coordinate NADPH: Val279 and Glu281.

It belongs to the NAD-dependent glycerol-3-phosphate dehydrogenase family.

Its subcellular location is the cytoplasm. The catalysed reaction is sn-glycerol 3-phosphate + NAD(+) = dihydroxyacetone phosphate + NADH + H(+). The enzyme catalyses sn-glycerol 3-phosphate + NADP(+) = dihydroxyacetone phosphate + NADPH + H(+). It functions in the pathway membrane lipid metabolism; glycerophospholipid metabolism. In terms of biological role, catalyzes the reduction of the glycolytic intermediate dihydroxyacetone phosphate (DHAP) to sn-glycerol 3-phosphate (G3P), the key precursor for phospholipid synthesis. The chain is Glycerol-3-phosphate dehydrogenase [NAD(P)+] from Frankia casuarinae (strain DSM 45818 / CECT 9043 / HFP020203 / CcI3).